We begin with the raw amino-acid sequence, 198 residues long: Recombination protein RecR (198 aa).

A C4-type zinc finger spans residues 57–72 (CPVCFNITDAERCDVC). Residues 80 to 173 (NLICVVEEPG…VVSRIAYGLP (94 aa)) enclose the Toprim domain.

The protein belongs to the RecR family.

Functionally, may play a role in DNA repair. It seems to be involved in an RecBC-independent recombinational process of DNA repair. It may act with RecF and RecO. The polypeptide is Recombination protein RecR (Deinococcus deserti (strain DSM 17065 / CIP 109153 / LMG 22923 / VCD115)).